The chain runs to 272 residues: Putative hydro-lyase RPB_3621 (272 aa).

Belongs to the D-glutamate cyclase family.

The polypeptide is Putative hydro-lyase RPB_3621 (Rhodopseudomonas palustris (strain HaA2)).